A 180-amino-acid chain; its full sequence is NAD(P)H-quinone oxidoreductase subunit I, chloroplastic (180 aa).

4Fe-4S ferredoxin-type domains lie at 55 to 84 (GRIH…VDWR) and 95 to 124 (LNYS…MTEE). [4Fe-4S] cluster-binding residues include C64, C67, C70, C74, C104, C107, C110, and C114.

The protein belongs to the complex I 23 kDa subunit family. NDH is composed of at least 16 different subunits, 5 of which are encoded in the nucleus. [4Fe-4S] cluster serves as cofactor.

The protein localises to the plastid. It localises to the chloroplast thylakoid membrane. The enzyme catalyses a plastoquinone + NADH + (n+1) H(+)(in) = a plastoquinol + NAD(+) + n H(+)(out). It catalyses the reaction a plastoquinone + NADPH + (n+1) H(+)(in) = a plastoquinol + NADP(+) + n H(+)(out). Its function is as follows. NDH shuttles electrons from NAD(P)H:plastoquinone, via FMN and iron-sulfur (Fe-S) centers, to quinones in the photosynthetic chain and possibly in a chloroplast respiratory chain. The immediate electron acceptor for the enzyme in this species is believed to be plastoquinone. Couples the redox reaction to proton translocation, and thus conserves the redox energy in a proton gradient. The protein is NAD(P)H-quinone oxidoreductase subunit I, chloroplastic of Amborella trichopoda.